The following is a 280-amino-acid chain: Phosphatidylglycerol--prolipoprotein diacylglyceryl transferase (280 aa).

Transmembrane regions (helical) follow at residues 30 to 50 (WYGLAYVAGILLGWLYARRII), 71 to 91 (FLLWAAGGIVLGGRIGYILFY), 106 to 126 (IWNGGMSFHGGLLGTTLAIII), and 132 to 152 (AIPLWSLFDVVAAVVPIGLFF). Arg154 contributes to the a 1,2-diacyl-sn-glycero-3-phospho-(1'-sn-glycerol) binding site. Transmembrane regions (helical) follow at residues 188–208 (QLYEAALEGIVLLVVLAWFVY), 217–237 (GLVTGIFVCGYAASRIFVEFF), and 251–271 (WLTMGMVLSLPMALVGIWAIA).

This sequence belongs to the Lgt family.

The protein localises to the cell inner membrane. The catalysed reaction is L-cysteinyl-[prolipoprotein] + a 1,2-diacyl-sn-glycero-3-phospho-(1'-sn-glycerol) = an S-1,2-diacyl-sn-glyceryl-L-cysteinyl-[prolipoprotein] + sn-glycerol 1-phosphate + H(+). Its pathway is protein modification; lipoprotein biosynthesis (diacylglyceryl transfer). Its function is as follows. Catalyzes the transfer of the diacylglyceryl group from phosphatidylglycerol to the sulfhydryl group of the N-terminal cysteine of a prolipoprotein, the first step in the formation of mature lipoproteins. The polypeptide is Phosphatidylglycerol--prolipoprotein diacylglyceryl transferase (Rhizobium meliloti (strain 1021) (Ensifer meliloti)).